We begin with the raw amino-acid sequence, 212 residues long: High frequency lysogenization protein HflD homolog (212 aa).

The protein belongs to the HflD family.

Its subcellular location is the cytoplasm. It is found in the cell inner membrane. This chain is High frequency lysogenization protein HflD homolog, found in Pectobacterium carotovorum subsp. carotovorum (strain PC1).